Reading from the N-terminus, the 371-residue chain is Serine/threonine-protein kinase 17B (371 aa).

The 261-residue stretch at 33-293 (TLTPKELGRG…AESCLSHSWL (261 aa)) folds into the Protein kinase domain. Residues 39-47 (LGRGKFAVV) and Lys-62 each bind ATP. The Proton acceptor role is filled by Asp-158. A disordered region spans residues 308–345 (SESSQTQDLSLRSSEDKTPKSCNGSCGDREDKENIPED). Over residues 309–319 (ESSQTQDLSLR) the composition is skewed to polar residues.

It belongs to the protein kinase superfamily. CAMK Ser/Thr protein kinase family. DAP kinase subfamily. As to quaternary structure, interacts with CHP1; the interaction induces CHP1 to translocate from the Golgi to the nucleus. Autophosphorylated. Highly expressed in thymus, spleen, and testis, lower levels present in the brain.

The protein localises to the nucleus. It is found in the cell membrane. It localises to the endoplasmic reticulum-Golgi intermediate compartment. The catalysed reaction is L-seryl-[protein] + ATP = O-phospho-L-seryl-[protein] + ADP + H(+). It catalyses the reaction L-threonyl-[protein] + ATP = O-phospho-L-threonyl-[protein] + ADP + H(+). Functionally, acts as a positive regulator of apoptosis. Phosphorylates myosin light chains. This chain is Serine/threonine-protein kinase 17B (Stk17b), found in Rattus norvegicus (Rat).